The sequence spans 688 residues: Elongation factor G (688 aa).

One can recognise a tr-type G domain in the interval 8 to 282 (DKFRNFGIMA…GVVDYLPSPL (275 aa)). Residues 17-24 (AHIDAGKT), 81-85 (DTPGH), and 135-138 (NKMD) contribute to the GTP site.

This sequence belongs to the TRAFAC class translation factor GTPase superfamily. Classic translation factor GTPase family. EF-G/EF-2 subfamily.

Its subcellular location is the cytoplasm. In terms of biological role, catalyzes the GTP-dependent ribosomal translocation step during translation elongation. During this step, the ribosome changes from the pre-translocational (PRE) to the post-translocational (POST) state as the newly formed A-site-bound peptidyl-tRNA and P-site-bound deacylated tRNA move to the P and E sites, respectively. Catalyzes the coordinated movement of the two tRNA molecules, the mRNA and conformational changes in the ribosome. The chain is Elongation factor G from Clostridium beijerinckii (strain ATCC 51743 / NCIMB 8052) (Clostridium acetobutylicum).